Here is a 109-residue protein sequence, read N- to C-terminus: Nucleoid-associated protein LGAS_0369 (109 aa).

It belongs to the YbaB/EbfC family. As to quaternary structure, homodimer.

It localises to the cytoplasm. Its subcellular location is the nucleoid. In terms of biological role, binds to DNA and alters its conformation. May be involved in regulation of gene expression, nucleoid organization and DNA protection. The protein is Nucleoid-associated protein LGAS_0369 of Lactobacillus gasseri (strain ATCC 33323 / DSM 20243 / BCRC 14619 / CIP 102991 / JCM 1131 / KCTC 3163 / NCIMB 11718 / NCTC 13722 / AM63).